The primary structure comprises 153 residues: Ribosomal RNA large subunit methyltransferase H (153 aa).

S-adenosyl-L-methionine contacts are provided by residues L63, G102, and 121–126 (FGKITL).

Belongs to the RNA methyltransferase RlmH family. In terms of assembly, homodimer.

It localises to the cytoplasm. The enzyme catalyses pseudouridine(1915) in 23S rRNA + S-adenosyl-L-methionine = N(3)-methylpseudouridine(1915) in 23S rRNA + S-adenosyl-L-homocysteine + H(+). Specifically methylates the pseudouridine at position 1915 (m3Psi1915) in 23S rRNA. This Sulfurovum sp. (strain NBC37-1) protein is Ribosomal RNA large subunit methyltransferase H.